Here is a 257-residue protein sequence, read N- to C-terminus: Distal membrane-arm assembly complex protein 2 (257 aa).

Ser253 is modified (phosphoserine).

Belongs to the ATP synthase subunit s family. Interacts with incompletely assembled mitochondrial NADH:ubiquinone oxidoreductase complex (complex I).

The protein localises to the mitochondrion. In terms of biological role, required for the assembly of the mitochondrial NADH:ubiquinone oxidoreductase complex (complex I). Involved in the assembly of the distal region of complex I. This is Distal membrane-arm assembly complex protein 2 from Homo sapiens (Human).